A 97-amino-acid polypeptide reads, in one-letter code: Cytochrome c2 iso-2 (97 aa).

Residues Cys10, Cys13, His14, and Met75 each contribute to the heme c site.

This sequence belongs to the cytochrome c family. Post-translationally, binds 1 heme c group covalently per subunit.

Its function is as follows. Cytochrome c2 is found mainly in purple, non-sulfur, photosynthetic bacteria where it functions as the electron donor to the oxidized bacteriochlorophyll in the photophosphorylation pathway. However, it may also have a role in the respiratory chain and is found in some non-photosynthetic bacteria. In Magnetospirillum molischianum (Rhodospirillum molischianum), this protein is Cytochrome c2 iso-2.